A 248-amino-acid chain; its full sequence is DNA repair protein RecO (248 aa).

This sequence belongs to the RecO family.

Involved in DNA repair and RecF pathway recombination. This is DNA repair protein RecO from Oleidesulfovibrio alaskensis (strain ATCC BAA-1058 / DSM 17464 / G20) (Desulfovibrio alaskensis).